The following is a 129-amino-acid chain: NADH-quinone oxidoreductase subunit A (129 aa).

The next 3 membrane-spanning stretches (helical) occupy residues phenylalanine 9–alanine 29, leucine 68–leucine 88, and leucine 97–valine 117.

The protein belongs to the complex I subunit 3 family. As to quaternary structure, NDH-1 is composed of 14 different subunits. Subunits NuoA, H, J, K, L, M, N constitute the membrane sector of the complex.

Its subcellular location is the cell inner membrane. It carries out the reaction a quinone + NADH + 5 H(+)(in) = a quinol + NAD(+) + 4 H(+)(out). In terms of biological role, NDH-1 shuttles electrons from NADH, via FMN and iron-sulfur (Fe-S) centers, to quinones in the respiratory chain. The immediate electron acceptor for the enzyme in this species is believed to be ubiquinone. Couples the redox reaction to proton translocation (for every two electrons transferred, four hydrogen ions are translocated across the cytoplasmic membrane), and thus conserves the redox energy in a proton gradient. The polypeptide is NADH-quinone oxidoreductase subunit A (Anaeromyxobacter dehalogenans (strain 2CP-C)).